We begin with the raw amino-acid sequence, 294 residues long: ATP synthase gamma chain (294 aa).

It belongs to the ATPase gamma chain family. In terms of assembly, F-type ATPases have 2 components, CF(1) - the catalytic core - and CF(0) - the membrane proton channel. CF(1) has five subunits: alpha(3), beta(3), gamma(1), delta(1), epsilon(1). CF(0) has three main subunits: a, b and c.

It localises to the cell inner membrane. Functionally, produces ATP from ADP in the presence of a proton gradient across the membrane. The gamma chain is believed to be important in regulating ATPase activity and the flow of protons through the CF(0) complex. This is ATP synthase gamma chain from Nitrosomonas eutropha (strain DSM 101675 / C91 / Nm57).